We begin with the raw amino-acid sequence, 318 residues long: NADH-quinone oxidoreductase subunit H 2 (318 aa).

9 consecutive transmembrane segments (helical) span residues L4–F24, L77–P97, V106–A126, L146–F166, L179–A199, L214–E234, I238–L258, I262–L282, and F293–A313.

Belongs to the complex I subunit 1 family. NDH-1 is composed of 14 different subunits. Subunits NuoA, H, J, K, L, M, N constitute the membrane sector of the complex.

It localises to the cell inner membrane. The catalysed reaction is a quinone + NADH + 5 H(+)(in) = a quinol + NAD(+) + 4 H(+)(out). Its function is as follows. NDH-1 shuttles electrons from NADH, via FMN and iron-sulfur (Fe-S) centers, to quinones in the respiratory chain. The immediate electron acceptor for the enzyme in this species is believed to be ubiquinone. Couples the redox reaction to proton translocation (for every two electrons transferred, four hydrogen ions are translocated across the cytoplasmic membrane), and thus conserves the redox energy in a proton gradient. This subunit may bind ubiquinone. The chain is NADH-quinone oxidoreductase subunit H 2 from Cereibacter sphaeroides (strain ATCC 17023 / DSM 158 / JCM 6121 / CCUG 31486 / LMG 2827 / NBRC 12203 / NCIMB 8253 / ATH 2.4.1.) (Rhodobacter sphaeroides).